A 235-amino-acid chain; its full sequence is MKKTIIASSLAVGLGVVAGNAGHADASEAQVNKAELAQLAQSNDQSLNDSPIQEGAYNVTFDYEGFTYHFESDGTNWSWNYAQSGQASQQQDVSAQASTVSNQTSAEQVGSQQQSSQAQPTQTQQAPQTEQTQQPQTEATTSNSSSSNNNASSGSSVNVNSHLQQIAQRESGGDITAINPSSGAAGKYQFLQSTWDSVAPDEYKGVSPAQAPEDVQDAAAVKLYNTAGASQWVTA.

An N-terminal signal peptide occupies residues 1–26; it reads MKKTIIASSLAVGLGVVAGNAGHADA. The interval 90-159 is disordered; sequence QQDVSAQAST…NASSGSSVNV (70 aa). Polar residues predominate over residues 99 to 110; the sequence is TVSNQTSAEQVG. Residues 111–159 are compositionally biased toward low complexity; sequence SQQQSSQAQPTQTQQAPQTEQTQQPQTEATTSNSSSSNNNASSGSSVNV.

Belongs to the transglycosylase family. SceD subfamily.

It localises to the secreted. In terms of biological role, is able to cleave peptidoglycan and affects clumping and separation of bacterial cells. The chain is Probable transglycosylase SceD (sceD) from Staphylococcus haemolyticus (strain JCSC1435).